Reading from the N-terminus, the 248-residue chain is Small ribosomal subunit protein eS1 (248 aa).

Residues 1–21 (MAVGKDKRISKGKKGGKKKIV) are disordered.

Belongs to the eukaryotic ribosomal protein eS1 family. In terms of assembly, component of the small ribosomal subunit. Mature ribosomes consist of a small (40S) and a large (60S) subunit. The 40S subunit contains about 33 different proteins and 1 molecule of RNA (18S). The 60S subunit contains about 49 different proteins and 3 molecules of RNA (25S, 5.8S and 5S).

The protein localises to the cytoplasm. In Syntrichia ruralis (Great hairy screw-moss), this protein is Small ribosomal subunit protein eS1.